The chain runs to 710 residues: Solute carrier organic anion transporter family member 3A1 (710 aa).

Residue Met1 is modified to N-acetylmethionine. The tract at residues 1–25 (MQAKKPGGSSGGGRSGELQGDEAQR) is disordered. Over 1 to 40 (MQAKKPGGSSGGGRSGELQGDEAQRNKKKKKKVSCFSNIK) the chain is Cytoplasmic. Residues 41 to 60 (IFLVSECALMLAQGTVGAYL) form a helical membrane-spanning segment. Residues 61-79 (VSVLTTLERRFNLQSADVG) are Extracellular-facing. Residues 80-100 (VIASSFEIGNLALILFVSYFG) form a helical membrane-spanning segment. The Cytoplasmic segment spans residues 101–106 (ARGHRP). A helical membrane pass occupies residues 107 to 131 (RLIGCGGIVMALGALLSALPEFLTH). Residues 132–174 (QYKYEAGEIRWGAEGRDVCAANGSGGDQGPDPDLICRSRTATN) are Extracellular-facing. Asn153 carries an N-linked (GlcNAc...) asparagine glycan. A helical transmembrane segment spans residues 175 to 203 (MMYLLLIGAQVLLGIGATPVQPLGVSYID). At 204–222 (DHVRRKDSSLYIGILFTML) the chain is on the cytoplasmic side. The chain crosses the membrane as a helical span at residues 223–243 (VFGPACGFILGSFCTKIYVDA). The Extracellular portion of the chain corresponds to 244–261 (VFIDTSNLDITPDDPRWI). Residues 262-286 (GAWWGGFLLCGALLFFSSVLMFGFP) form a helical membrane-spanning segment. Residues 287–344 (QSLPPHSDPALESEQAMLPEREYERPKPSNGVLRHPLEPDSSASCFQQLRVIPKVTKH) lie on the Cytoplasmic side of the membrane. Residues 345-366 (LLSNPVFTCIILAACMEIAVVA) traverse the membrane as a helical segment. The Extracellular segment spans residues 367–386 (GFAAFLGKYLEQQFNLTTSS). N-linked (GlcNAc...) asparagine glycosylation occurs at Asn381. The chain crosses the membrane as a helical span at residues 387 to 410 (ANQLLGMTAIPCACLGIFLGGLLV). Residues 411–414 (KKLS) are Cytoplasmic-facing. A helical transmembrane segment spans residues 415-438 (LSALGAIRMAMLVNLVSTACYVSF). Over 439–539 (LFLGCDTGPV…PGCQEAFLTF (101 aa)) the chain is Extracellular. An N-linked (GlcNAc...) asparagine glycan is attached at Asn457. The 49-residue stretch at 465 to 513 (LDPYSSCNKNCECQTDSFTPVCGADGITYLSACFAGCNSTNLTGCACLM) folds into the Kazal-like domain. Intrachain disulfides connect Cys471–Cys501, Cys477–Cys497, and Cys486–Cys511. Asn502, Asn505, and Asn519 each carry an N-linked (GlcNAc...) asparagine glycan. A helical membrane pass occupies residues 540 to 562 (LCVMCVCSMIGAMAQTPSVIILI). Over 563 to 571 (RTVSPELKS) the chain is Cytoplasmic. A helical transmembrane segment spans residues 572 to 597 (YALGVLFLLLRLLGFIPPPLIFGAGI). At 598 to 630 (DSTCLFWSTFCGEQGACALYDNVAYRYLYVSIA) the chain is on the extracellular side. Residues 631–648 (IALKSFAFLLYTTTWQCL) traverse the membrane as a helical segment. At 649–705 (RKNYKRYIKNHEGGLSTSEFFASTLTLDNLGRDPVPANQTHRTKFIYNLEDHEWCEN) the chain is on the cytoplasmic side.

Belongs to the organo anion transporter (TC 2.A.60) family.

It localises to the basolateral cell membrane. Its subcellular location is the apical cell membrane. It is found in the basal cell membrane. The catalysed reaction is L-thyroxine(out) = L-thyroxine(in). It carries out the reaction prostaglandin E1(out) = prostaglandin E1(in). It catalyses the reaction prostaglandin E2(out) = prostaglandin E2(in). The enzyme catalyses prostaglandin F2alpha(out) = prostaglandin F2alpha(in). The catalysed reaction is (5Z,8Z,11Z,14Z)-eicosatetraenoate(out) = (5Z,8Z,11Z,14Z)-eicosatetraenoate(in). It carries out the reaction taurocholate(out) = taurocholate(in). It catalyses the reaction glycocholate(out) = glycocholate(in). The enzyme catalyses estrone 3-sulfate(out) = estrone 3-sulfate(in). The catalysed reaction is argipressin(out) = argipressin(in). Putative organic anion antiporter with apparent broad substrate specificity. Recognizes various substrates including thyroid hormone L-thyroxine, prostanoids such as prostaglandin E1 and E2, bile acids such as taurocholate, glycolate and glycochenodeoxycholate and peptide hormones such as L-arginine vasopressin, likely operating in a tissue-specific manner. The transport mechanism, its electrogenicity and potential tissue-specific counterions remain to be elucidated. This is Solute carrier organic anion transporter family member 3A1 (SLCO3A1) from Bos taurus (Bovine).